The following is a 421-amino-acid chain: ATP-dependent RNA helicase RhlB (421 aa).

Residues 9-37 carry the Q motif motif; it reads QKFSDFALHPQVVEALEKKGFYNCTPIQA. Residues 40–219 enclose the Helicase ATP-binding domain; it reads LPLTLAGRDV…FEQMNNAEYV (180 aa). ATP is bound at residue 53-60; it reads AQTGTGKT. The DEAD box signature appears at 165–168; sequence DEAD. Residues 245–390 form the Helicase C-terminal domain; that stretch reads RLLQTLIEEE…VSKYNPEALM (146 aa). The interval 396 to 421 is disordered; it reads PLRLTRSRPGNGPRRAGAPRNRRRSG. A compositionally biased stretch (low complexity) spans 402 to 414; the sequence is SRPGNGPRRAGAP.

It belongs to the DEAD box helicase family. RhlB subfamily. In terms of assembly, component of the RNA degradosome, which is a multiprotein complex involved in RNA processing and mRNA degradation.

Its subcellular location is the cytoplasm. The enzyme catalyses ATP + H2O = ADP + phosphate + H(+). DEAD-box RNA helicase involved in RNA degradation. Has RNA-dependent ATPase activity and unwinds double-stranded RNA. The polypeptide is ATP-dependent RNA helicase RhlB (Salmonella agona (strain SL483)).